The sequence spans 107 residues: UPF0122 protein STH1464 (107 aa).

It belongs to the UPF0122 family.

In terms of biological role, might take part in the signal recognition particle (SRP) pathway. This is inferred from the conservation of its genetic proximity to ftsY/ffh. May be a regulatory protein. The polypeptide is UPF0122 protein STH1464 (Symbiobacterium thermophilum (strain DSM 24528 / JCM 14929 / IAM 14863 / T)).